The primary structure comprises 317 residues: DNA-directed RNA polymerase subunit alpha (317 aa).

Residues 1–234 are alpha N-terminal domain (alpha-NTD); it reads MKQFNKPEFG…SHFDVFTTLA (234 aa). The interval 249 to 317 is alpha C-terminal domain (alpha-CTD); it reads EEKELDKPVE…AALELTFKQN (69 aa).

The protein belongs to the RNA polymerase alpha chain family. Homodimer. The RNAP catalytic core consists of 2 alpha, 1 beta, 1 beta' and 1 omega subunit. When a sigma factor is associated with the core the holoenzyme is formed, which can initiate transcription.

The catalysed reaction is RNA(n) + a ribonucleoside 5'-triphosphate = RNA(n+1) + diphosphate. In terms of biological role, DNA-dependent RNA polymerase catalyzes the transcription of DNA into RNA using the four ribonucleoside triphosphates as substrates. The sequence is that of DNA-directed RNA polymerase subunit alpha from Mesoplasma florum (strain ATCC 33453 / NBRC 100688 / NCTC 11704 / L1) (Acholeplasma florum).